Reading from the N-terminus, the 90-residue chain is Small ribosomal subunit protein uS15 (90 aa).

The protein belongs to the universal ribosomal protein uS15 family. In terms of assembly, part of the 30S ribosomal subunit. Forms a bridge to the 50S subunit in the 70S ribosome, contacting the 23S rRNA.

One of the primary rRNA binding proteins, it binds directly to 16S rRNA where it helps nucleate assembly of the platform of the 30S subunit by binding and bridging several RNA helices of the 16S rRNA. Functionally, forms an intersubunit bridge (bridge B4) with the 23S rRNA of the 50S subunit in the ribosome. This chain is Small ribosomal subunit protein uS15, found in Wolbachia sp. subsp. Drosophila simulans (strain wRi).